A 316-amino-acid chain; its full sequence is Transaldolase 2 (316 aa).

The Schiff-base intermediate with substrate role is filled by lysine 131.

The protein belongs to the transaldolase family. Type 1 subfamily. In terms of assembly, homodimer.

It is found in the cytoplasm. The catalysed reaction is D-sedoheptulose 7-phosphate + D-glyceraldehyde 3-phosphate = D-erythrose 4-phosphate + beta-D-fructose 6-phosphate. It participates in carbohydrate degradation; pentose phosphate pathway; D-glyceraldehyde 3-phosphate and beta-D-fructose 6-phosphate from D-ribose 5-phosphate and D-xylulose 5-phosphate (non-oxidative stage): step 2/3. Transaldolase is important for the balance of metabolites in the pentose-phosphate pathway. The polypeptide is Transaldolase 2 (Shigella sonnei (strain Ss046)).